The sequence spans 293 residues: Energy-coupling factor transporter ATP-binding protein EcfA2 (293 aa).

Positions 3–246 (ITFQKVEHRY…ADELEKIGVD (244 aa)) constitute an ABC transporter domain. 40 to 47 (GHTGSGKS) provides a ligand contact to ATP.

It belongs to the ABC transporter superfamily. Energy-coupling factor EcfA family. Forms a stable energy-coupling factor (ECF) transporter complex composed of 2 membrane-embedded substrate-binding proteins (S component), 2 ATP-binding proteins (A component) and 2 transmembrane proteins (T component).

It is found in the cell membrane. ATP-binding (A) component of a common energy-coupling factor (ECF) ABC-transporter complex. Unlike classic ABC transporters this ECF transporter provides the energy necessary to transport a number of different substrates. This chain is Energy-coupling factor transporter ATP-binding protein EcfA2, found in Bacillus cereus (strain ZK / E33L).